The primary structure comprises 444 residues: Tol-Pal system protein TolB (444 aa).

A signal peptide spans 1–26; the sequence is MNLFRSLAPMGLALALLLPAAAPALA. The span at 287 to 310 shows a compositional bias: polar residues; that stretch reads ASGTRRQLTNSPSIETAPSYSPDG. The disordered stretch occupies residues 287 to 311; the sequence is ASGTRRQLTNSPSIETAPSYSPDGS.

It belongs to the TolB family. In terms of assembly, the Tol-Pal system is composed of five core proteins: the inner membrane proteins TolA, TolQ and TolR, the periplasmic protein TolB and the outer membrane protein Pal. They form a network linking the inner and outer membranes and the peptidoglycan layer.

It localises to the periplasm. Functionally, part of the Tol-Pal system, which plays a role in outer membrane invagination during cell division and is important for maintaining outer membrane integrity. The chain is Tol-Pal system protein TolB from Cereibacter sphaeroides (strain ATCC 17025 / ATH 2.4.3) (Rhodobacter sphaeroides).